We begin with the raw amino-acid sequence, 260 residues long: Shikimate dehydrogenase (260 aa).

Lys71 serves as the catalytic Proton acceptor. Residue 124–128 (GAGGA) coordinates NADP(+).

The protein belongs to the shikimate dehydrogenase family.

It catalyses the reaction shikimate + NADP(+) = 3-dehydroshikimate + NADPH + H(+). It participates in metabolic intermediate biosynthesis; chorismate biosynthesis; chorismate from D-erythrose 4-phosphate and phosphoenolpyruvate: step 4/7. This is Shikimate dehydrogenase (aroE) from Sulfurisphaera tokodaii (strain DSM 16993 / JCM 10545 / NBRC 100140 / 7) (Sulfolobus tokodaii).